Here is a 235-residue protein sequence, read N- to C-terminus: tRNA pseudouridine synthase B (235 aa).

Aspartate 45 acts as the Nucleophile in catalysis.

Belongs to the pseudouridine synthase TruB family. Type 1 subfamily.

The catalysed reaction is uridine(55) in tRNA = pseudouridine(55) in tRNA. Responsible for synthesis of pseudouridine from uracil-55 in the psi GC loop of transfer RNAs. The sequence is that of tRNA pseudouridine synthase B from Chlamydia felis (strain Fe/C-56) (Chlamydophila felis).